We begin with the raw amino-acid sequence, 223 residues long: Cytidylate kinase (223 aa).

10 to 18 (GPASSGKST) contacts ATP.

Belongs to the cytidylate kinase family. Type 1 subfamily.

The protein resides in the cytoplasm. It catalyses the reaction CMP + ATP = CDP + ADP. The enzyme catalyses dCMP + ATP = dCDP + ADP. This Streptococcus pneumoniae (strain 70585) protein is Cytidylate kinase.